A 525-amino-acid chain; its full sequence is MALDIHAHRILILDFGSQYTQLIARRVREIGVYCELHPFDMDDEAIREFNPRGIILAGGPESVHEANSPRAPQAVFDLNVPLLGICYGMQTMAEQLGGKVEGSDLREFGYARVDVVGKSRLLDGIEDHVDGDGVLGLDVWMSHGDKVTQMPGNFNILASTPSCPIAGMFDDARGYYGVQFHPEVTHTKQGGRILSRFVQDICGCEALWTPSNIVEDAIAQVRQQVGSANVLLGLSGGVDSSVVAALLHRAIGDQLTCVFVDNGLLRLHEGDQVMAMFKENMGVKVIRADAEKQFLDNLEGEADPEKKRKIIGRTFIDVFDAEASKLDNIQFLAQGTIYPDVIESAGAKSGKAHVIKSHHNVGGLPEEMNLKLVEPLRELFKDEVRKIGLELGLPYDMVYRHPFPGPGLGVRILGEVKKEYADILRRADHIFIEELRKADWYHKTSQAFVVFQPVKSVGVVGDGRRYAWVVALRAVETVDFMTARWAHLPYDLLETVSGRIINEIDGISRVTYDVSSKPPATIEWE.

Residues 9–207 (RILILDFGSQ…VQDICGCEAL (199 aa)) enclose the Glutamine amidotransferase type-1 domain. C86 (nucleophile) is an active-site residue. Active-site residues include H181 and E183. The GMPS ATP-PPase domain occupies 208 to 400 (WTPSNIVEDA…LGLPYDMVYR (193 aa)). 235-241 (SGGVDSS) contributes to the ATP binding site.

In terms of assembly, homodimer.

The enzyme catalyses XMP + L-glutamine + ATP + H2O = GMP + L-glutamate + AMP + diphosphate + 2 H(+). Its pathway is purine metabolism; GMP biosynthesis; GMP from XMP (L-Gln route): step 1/1. Its function is as follows. Catalyzes the synthesis of GMP from XMP. This chain is GMP synthase [glutamine-hydrolyzing], found in Pseudomonas putida (strain W619).